A 447-amino-acid polypeptide reads, in one-letter code: ATP-dependent protease ATPase subunit HslU (447 aa).

Residues I17 and 59-64 (GVGKTE) each bind ATP. Residues 136 to 160 (PPARGGFQGEPTAEEKPTEKKESAT) are disordered. Over residues 148 to 159 (AEEKPTEKKESA) the composition is skewed to basic and acidic residues. Positions 260, 325, and 397 each coordinate ATP.

It belongs to the ClpX chaperone family. HslU subfamily. As to quaternary structure, a double ring-shaped homohexamer of HslV is capped on each side by a ring-shaped HslU homohexamer. The assembly of the HslU/HslV complex is dependent on binding of ATP.

It is found in the cytoplasm. In terms of biological role, ATPase subunit of a proteasome-like degradation complex; this subunit has chaperone activity. The binding of ATP and its subsequent hydrolysis by HslU are essential for unfolding of protein substrates subsequently hydrolyzed by HslV. HslU recognizes the N-terminal part of its protein substrates and unfolds these before they are guided to HslV for hydrolysis. This Coxiella burnetii (strain Dugway 5J108-111) protein is ATP-dependent protease ATPase subunit HslU.